We begin with the raw amino-acid sequence, 256 residues long: Undecaprenyl-diphosphatase (256 aa).

The next 7 membrane-spanning stretches (helical) occupy residues 39 to 59 (PTDA…AVLV), 77 to 97 (RTVI…YMLF), 101 to 121 (FTGG…TGLM), 135 to 155 (ISTK…LPGV), 176 to 196 (LMVS…LDCL), 206 to 226 (LPGA…MDVL), and 233 to 253 (VSFS…TALP).

This sequence belongs to the UppP family.

It localises to the cell membrane. It carries out the reaction di-trans,octa-cis-undecaprenyl diphosphate + H2O = di-trans,octa-cis-undecaprenyl phosphate + phosphate + H(+). In terms of biological role, catalyzes the dephosphorylation of undecaprenyl diphosphate (UPP). This chain is Undecaprenyl-diphosphatase, found in Methanothrix thermoacetophila (strain DSM 6194 / JCM 14653 / NBRC 101360 / PT) (Methanosaeta thermophila).